The primary structure comprises 331 residues: Geranylgeranyl transferase type-2 subunit beta (331 aa).

Position 2 is an N-acetylglycine (G2). T3 carries the post-translational modification Phosphothreonine. 6 PFTB repeats span residues 20–61 (LEKH…DLMG), 68–109 (REEI…TLYD), 116–157 (VNKV…ALLG), 164–205 (VEKA…AITS), 212–253 (SDLL…KIIG), and 260–302 (REKL…SLLG). 190-192 (HAG) contacts geranylgeranyl diphosphate. Zn(2+) contacts are provided by D238 and C240. Residue 241–244 (YSWW) coordinates geranylgeranyl diphosphate. H290 contacts Zn(2+).

The protein belongs to the protein prenyltransferase subunit beta family. Heterotrimer composed of RABGGTA, RABGGTB and CHM; within this trimer, RABGGTA and RABGGTB form the catalytic component B, while CHM (component A) mediates peptide substrate binding. The Rab GGTase dimer (RGGT) interacts with CHM (component A) prior to Rab protein binding; the association is stabilized by geranylgeranyl pyrophosphate (GGpp). The CHM:RGGT:Rab complex is destabilized by GGpp. Interaction of RABGGTB with prenylated PTP4A2 precludes its association with RABGGTA and inhibits enzyme activity. Interacts with CHODL. Interacts with non-phosphorylated form of RAB8A; phosphorylation of RAB8A at 'Thr-72' disrupts this interaction. Requires Zn(2+) as cofactor.

The catalysed reaction is geranylgeranyl diphosphate + L-cysteinyl-[protein] = S-geranylgeranyl-L-cysteinyl-[protein] + diphosphate. Its activity is regulated as follows. The enzymatic reaction requires the aid of a Rab escort protein (also called component A). In terms of biological role, catalyzes the transfer of a geranylgeranyl moiety from geranylgeranyl diphosphate to both cysteines of Rab proteins with the C-terminal sequence -XXCC, -XCXC and -CCXX, such as RAB1A, RAB3A, RAB5A and RAB7A. This chain is Geranylgeranyl transferase type-2 subunit beta (RABGGTB), found in Homo sapiens (Human).